The sequence spans 161 residues: MRIAIYPGSFDPVTYAHLDIARRATRIFDRVIMAVFDRPQKRLLFSTAERLQLLQAVTADLVNVEATSYEMLTVEFARQVGACAIVRGLRAGSDFEAEFQMAQVNQTIDPNIEVVVLMAGRQFAHISSTAVREMASLGRDPVEFTPPVVVAALREKFAQRG.

Ser-9 contributes to the substrate binding site. ATP is bound by residues 9 to 10 (SF) and His-17. Positions 41, 73, and 87 each coordinate substrate. ATP contacts are provided by residues 88–90 (GLR), Glu-98, and 123–129 (FAHISST).

The protein belongs to the bacterial CoaD family. As to quaternary structure, homohexamer. Mg(2+) serves as cofactor.

The protein resides in the cytoplasm. The enzyme catalyses (R)-4'-phosphopantetheine + ATP + H(+) = 3'-dephospho-CoA + diphosphate. It functions in the pathway cofactor biosynthesis; coenzyme A biosynthesis; CoA from (R)-pantothenate: step 4/5. Reversibly transfers an adenylyl group from ATP to 4'-phosphopantetheine, yielding dephospho-CoA (dPCoA) and pyrophosphate. The chain is Phosphopantetheine adenylyltransferase from Chloroflexus aurantiacus (strain ATCC 29366 / DSM 635 / J-10-fl).